Here is a 705-residue protein sequence, read N- to C-terminus: MDENLLATAATNGVVVTWNLGKPSRNKQDQLFTEHKRTVNKVCFHPTEVYMLLSGSQDGYMKCFDLRKKDSVSTFSGQSESVRDVQFSIRDYFTFAATFENGNVQLWDIRRPDRYERMFTAHNGPVFCCDWHPEDRGWLATGGRDKMVKVWDMNTTRAKEIYCVQTIASVARVKWRPECKHHIATCSMMVDHNIYVWDVRRPFIPSAMFEEHKDVTTGIVWRHLHDPYFLLSGSKDSTLYQHIFKDASQPIDRANPEGLCYSLYGDLAFAAKESLISSDSNRKPYIGDRRHPIFFKRKLDPTEQFEYISSSSALSVFETDVESGSMDWFVHTAKQYALAGRPLAELCDHNAKVAKGLDRNQVAQTWTMLRIIYSSLGTVSSTNLNHSMGKGSTTLPLMNSFNLKDIPSGLGSESRLDRSKGESRTENILMDSSSTLINNEDNEETEGSDVPADYLLGDVEADEDDLYMMDHENPHAEEQEYSLPQEAFPLRHEIVDNPSALDHLQDKADSPHVSGNEAETVSLTPVESFSLISISHSLYENRLPSDFFNPIVRDTLLFYAEQGDVQTAVSVLIVLGDRIRKEIDEQTQEHWYTSYIDLLQRFQLWNISNEVIKLSTCRAINCLNQASTTLHINCSNCKRPMSNRGWICDRCRQCASMCAVCHHVVKGLFVWCQGCSHGGHLQHIMKWLETSSHCPAGCGHLCEYT.

WD repeat units follow at residues 1–28 (MDEN…RNKQ), 34–74 (EHKR…SVST), 77–117 (GQSE…RYER), 121–161 (AHNG…AKEI), 165–207 (QTIA…IPSA), and 211–254 (EHKD…IDRA). A C4-type zinc finger spans residues 633–655 (NCSNCKRPMSNRGWICDRCRQCA). Zn(2+) contacts are provided by C634, C637, C648, C651, C658, C661, C672, C675, H677, H680, H683, C694, C698, H700, and C702. The RING-type; atypical zinc finger occupies 656–705 (SMCAVCHHVVKGLFVWCQGCSHGGHLQHIMKWLETSSHCPAGCGHLCEYT).

This sequence belongs to the WD repeat WDR24 family. In terms of assembly, component of the GATOR2 subcomplex, composed of MIOS, SEC13, SEH1L, WDR24 and WDR59. The GATOR2 complex interacts with CASTOR1 and CASTOR2; the interaction is negatively regulated by arginine. The GATOR2 complex interacts with SESN1, SESN2 and SESN3; the interaction is negatively regulated by amino acids.

Its subcellular location is the lysosome membrane. The catalysed reaction is S-ubiquitinyl-[E2 ubiquitin-conjugating enzyme]-L-cysteine + [acceptor protein]-L-lysine = [E2 ubiquitin-conjugating enzyme]-L-cysteine + N(6)-ubiquitinyl-[acceptor protein]-L-lysine.. It participates in protein modification; protein ubiquitination. Its activity is regulated as follows. The GATOR2 complex is negatively regulated by the upstream amino acid sensors CASTOR1 and SESN2, which sequester the GATOR2 complex in absence of amino acids. In the presence of abundant amino acids, GATOR2 is released from CASTOR1 and SESN2 and activated. Catalytic component of the GATOR2 complex, a multiprotein complex that acts as an activator of the amino acid-sensing branch of the mTORC1 signaling pathway. The GATOR2 complex indirectly activates mTORC1 through the inhibition of the GATOR1 subcomplex. GATOR2 probably acts as an E3 ubiquitin-protein ligase toward GATOR1. In the presence of abundant amino acids, the GATOR2 complex mediates ubiquitination of the NPRL2 core component of the GATOR1 complex, leading to GATOR1 inactivation. In the absence of amino acids, GATOR2 is inhibited, activating the GATOR1 complex. In addition to its role in regulation of the mTORC1 complex, promotes the acidification of lysosomes and facilitates autophagic flux. Within the GATOR2 complex, WDR24 constitutes the catalytic subunit that mediates 'Lys-6'-linked ubiquitination of NPRL2. The chain is GATOR2 complex protein WDR24 from Gallus gallus (Chicken).